The primary structure comprises 1273 residues: Ras-specific guanine nucleotide-releasing factor 1 (1273 aa).

The 108-residue stretch at 22–129 (DGTRKGYLSK…WVAAIAHASY (108 aa)) folds into the PH 1 domain. An IQ domain is found at 204 to 229 (KKIKKVQSFLRGWLCRRKWKTIIQDY). The DH domain maps to 240–426 (KRNQVVFSML…EELSRIMHDE (187 aa)). The PH 2 domain maps to 467 to 584 (PMSEKGKITR…WTSDISQCVD (118 aa)). Phosphoserine; by PLK2 occurs at positions 577 and 626. An N-terminal Ras-GEF domain is found at 644–761 (KVLQIRYASV…SRRRKLSLNI (118 aa)). The segment at 724 to 754 (YGEPPKSPRATRKFSSPPPLSITKTSSPSRR) is disordered. A Phosphoserine modification is found at serine 758. Phosphoserine; by PLK2 is present on residues serine 779 and serine 800. Residues 809–874 (TNKIPDEGDT…PKSVKNKNSS (66 aa)) form a disordered region. Acidic residues predominate over residues 842–854 (SDIDQNQSDDGDT). Low complexity predominate over residues 855-867 (ETSPTKSPTTPKS). Residues 1038–1270 (SALEIAEQLT…YESSLRIEPK (233 aa)) enclose the Ras-GEF domain.

As to quaternary structure, homooligomer and heterooligomer with RASGRF2. Interacts with USP8, thereby regulating its stability. Post-translationally, phosphorylated by PLK2, leading to ubiquitination and degradation by the proteasome. Ubiquitinated and degraded following phosphorylation by PLK2. In terms of processing, phosphorylated by SRC and LCK. Phosphorylation by LCK increases its capacity to stimulate the GDP/GTP exchange on Ras, whereas its phosphorylation by SRC seems not to have an effect on stimulation activity.

Functionally, promotes the exchange of Ras-bound GDP by GTP. The chain is Ras-specific guanine nucleotide-releasing factor 1 (RASGRF1) from Homo sapiens (Human).